The following is a 370-amino-acid chain: GMP synthase [glutamine-hydrolyzing] subunit B (370 aa).

The region spanning 3–189 (FDPQKFVDEI…LGLPRDIYNR (187 aa)) is the GMPS ATP-PPase domain. 29–35 (SGGVDST) provides a ligand contact to ATP.

Heterodimer composed of a glutamine amidotransferase subunit (A) and a GMP-binding subunit (B).

It catalyses the reaction XMP + L-glutamine + ATP + H2O = GMP + L-glutamate + AMP + diphosphate + 2 H(+). The protein operates within purine metabolism; GMP biosynthesis; GMP from XMP (L-Gln route): step 1/1. Its function is as follows. Catalyzes the synthesis of GMP from XMP. This chain is GMP synthase [glutamine-hydrolyzing] subunit B (guaAB), found in Sulfurisphaera tokodaii (strain DSM 16993 / JCM 10545 / NBRC 100140 / 7) (Sulfolobus tokodaii).